The sequence spans 36 residues: Photosystem I reaction center subunit VIII (36 aa).

Residues 6–26 (LPSIFVPLVGLVFPAIAMASL) traverse the membrane as a helical segment.

This sequence belongs to the PsaI family.

The protein localises to the plastid. It is found in the chloroplast thylakoid membrane. Functionally, may help in the organization of the PsaL subunit. This chain is Photosystem I reaction center subunit VIII, found in Drimys granadensis.